The chain runs to 448 residues: Phosphoglucosamine mutase (448 aa).

Catalysis depends on Ser-102, which acts as the Phosphoserine intermediate. Residues Ser-102, Asp-242, Asp-244, and Asp-246 each coordinate Mg(2+). Ser-102 is modified (phosphoserine).

This sequence belongs to the phosphohexose mutase family. The cofactor is Mg(2+). In terms of processing, activated by phosphorylation.

It carries out the reaction alpha-D-glucosamine 1-phosphate = D-glucosamine 6-phosphate. In terms of biological role, catalyzes the conversion of glucosamine-6-phosphate to glucosamine-1-phosphate. This chain is Phosphoglucosamine mutase, found in Brevibacillus brevis (strain 47 / JCM 6285 / NBRC 100599).